The following is a 76-amino-acid chain: Tautomerase PptA (76 aa).

Proline 2 serves as the catalytic Proton acceptor; via imino nitrogen.

This sequence belongs to the 4-oxalocrotonate tautomerase family. PptA subfamily. Homodimer.

The protein resides in the cytoplasm. This Cronobacter sakazakii (strain ATCC BAA-894) (Enterobacter sakazakii) protein is Tautomerase PptA.